The sequence spans 580 residues: MKIFFRYQTFRFIWLTKPPGRRLHKDHQLWTPLTLADFEAINRCNRPLPKNFNFAADVLDQWSQKEKTGERPANPALWWVNGKGDEVKWSFRELGSLSRKAANVLTKPCGLQRGDRLAVILPRIPEWWLVNVACIRTGIIFMPGTIQLTAKDILYRLRASKAKCIVASEEVAPAVESIVLECPDLKTKLLVSPQSWNGWLSFQELFQFASEEHSCVETGSQEPMTIYFTSGTTGFPKMAQHSQSSLGIGFTLCGRYWLDLKSSDIIWNMSDTGWVKAAIGSVFSSWLCGACVFVHRMAQFDTDTFLDTLTTYPITTLCSPPTVYRMLVQKDLKRYKFKSLRHCLTGGEPLNPEVLEQWRVQTGLELYEGYGQTEVGMICANQKGQEIKPGSMGKGMLPYDVQIIDENGNVLPPGKEGEIALRLKPTRPFCFFSKYVDNPQKTAATIRGDFYVTGDRGVMDSDGYFWFVGRADDVIISSGYRIGPFEVESALIEHPAVVESAVVSSPDQIRGEVVKAFVVLAAPFKSYNPEKLTLELQDHVKKSTAPYKYPRKVEFVQELPKTITGKIKRNVLRDQEWRGR.

The transit peptide at 1-22 (MKIFFRYQTFRFIWLTKPPGRR) directs the protein to the mitochondrion. ATP is bound by residues 229-237 (TSGTTGFPK), 368-373 (EGYGQT), Asp455, Arg470, and Lys566.

Belongs to the ATP-dependent AMP-binding enzyme family. Mg(2+) is required as a cofactor. The cofactor is Mn(2+).

The protein localises to the mitochondrion. The catalysed reaction is a medium-chain fatty acid + ATP + CoA = a medium-chain fatty acyl-CoA + AMP + diphosphate. It catalyses the reaction hexanoate + ATP + CoA = hexanoyl-CoA + AMP + diphosphate. The enzyme catalyses octanoate + ATP + CoA = octanoyl-CoA + AMP + diphosphate. It carries out the reaction decanoate + ATP + CoA = decanoyl-CoA + AMP + diphosphate. The catalysed reaction is dodecanoate + ATP + CoA = dodecanoyl-CoA + AMP + diphosphate. Catalyzes the activation of fatty acids by CoA to produce an acyl-CoA, the first step in fatty acid metabolism. Capable of activating medium-chain fatty acids with a preference for C6-12 fatty acids. This chain is Acyl-coenzyme A synthetase ACSM4, mitochondrial (ACSM4), found in Homo sapiens (Human).